Reading from the N-terminus, the 134-residue chain is Cytochrome b (134 aa).

A run of 3 helical transmembrane segments spans residues 33–53, 77–98, and 113–133; these read FGSL…FLAM, WLLR…YLHV, and WNVG…GYVL. Residues His83 and His97 each coordinate heme b.

This sequence belongs to the cytochrome b family. As to quaternary structure, the cytochrome bc1 complex contains 11 subunits: 3 respiratory subunits (MT-CYB, CYC1 and UQCRFS1), 2 core proteins (UQCRC1 and UQCRC2) and 6 low-molecular weight proteins (UQCRH/QCR6, UQCRB/QCR7, UQCRQ/QCR8, UQCR10/QCR9, UQCR11/QCR10 and a cleavage product of UQCRFS1). This cytochrome bc1 complex then forms a dimer. Heme b serves as cofactor.

It localises to the mitochondrion inner membrane. Functionally, component of the ubiquinol-cytochrome c reductase complex (complex III or cytochrome b-c1 complex) that is part of the mitochondrial respiratory chain. The b-c1 complex mediates electron transfer from ubiquinol to cytochrome c. Contributes to the generation of a proton gradient across the mitochondrial membrane that is then used for ATP synthesis. The polypeptide is Cytochrome b (MT-CYB) (Chiroderma trinitatum (Little big-eyed bat)).